The primary structure comprises 176 residues: UBA-like domain-containing protein 1 (176 aa).

Residues 87-176 are disordered; it reads SESFHGGGGS…RAHPAMEAER (90 aa). Low complexity predominate over residues 120–137; the sequence is TPSWPTAASPPGGPQQHQ. A compositionally biased stretch (pro residues) spans 138 to 150; the sequence is PQPPLWTPAPPSP. Positions 166 to 176 are enriched in basic and acidic residues; that stretch reads PRAHPAMEAER.

The protein belongs to the UBALD family.

This Mus musculus (Mouse) protein is UBA-like domain-containing protein 1 (Ubald1).